A 424-amino-acid polypeptide reads, in one-letter code: Adenylosuccinate synthetase (424 aa).

Residues 12–18 and 40–42 each bind GTP; these read GDEGKGK and GHT. Asp-13 acts as the Proton acceptor in catalysis. 2 residues coordinate Mg(2+): Asp-13 and Gly-40. Residues 13 to 16, 38 to 41, Thr-130, Arg-144, Asn-220, Thr-235, and Arg-299 each bind IMP; these read DEGK and NAGH. The active-site Proton donor is the His-41. 295 to 301 is a substrate binding site; the sequence is VTTGRKR. Residues Arg-301, 327 to 329, and 412 to 414 contribute to the GTP site; these read KLD and GTG.

It belongs to the adenylosuccinate synthetase family. As to quaternary structure, homodimer. Requires Mg(2+) as cofactor.

It localises to the cytoplasm. The catalysed reaction is IMP + L-aspartate + GTP = N(6)-(1,2-dicarboxyethyl)-AMP + GDP + phosphate + 2 H(+). It participates in purine metabolism; AMP biosynthesis via de novo pathway; AMP from IMP: step 1/2. In terms of biological role, plays an important role in the de novo pathway and in the salvage pathway of purine nucleotide biosynthesis. Catalyzes the first committed step in the biosynthesis of AMP from IMP. The protein is Adenylosuccinate synthetase (adB) of Emericella nidulans (strain FGSC A4 / ATCC 38163 / CBS 112.46 / NRRL 194 / M139) (Aspergillus nidulans).